A 512-amino-acid chain; its full sequence is Sugar transport protein MST7 (512 aa).

At Met-1 to Lys-17 the chain is on the cytoplasmic side. Residues Met-18–Tyr-38 traverse the membrane as a helical segment. Residues Asp-39–Leu-81 are Extracellular-facing. Residues Thr-82–Ile-102 traverse the membrane as a helical segment. Over Thr-103–Gly-116 the chain is Cytoplasmic. The helical transmembrane segment at Phe-117 to Ile-137 threads the bilayer. Residues Gly-138 to Arg-139 are Extracellular-facing. The chain crosses the membrane as a helical span at residues Ile-140 to Met-160. The Cytoplasmic portion of the chain corresponds to Ala-161–Arg-166. A helical membrane pass occupies residues Gly-167 to Ile-187. Residues Asn-188 to Arg-201 lie on the Extracellular side of the membrane. The chain crosses the membrane as a helical span at residues Val-202 to Pro-222. At Asp-223–Gln-294 the chain is on the cytoplasmic side. A helical membrane pass occupies residues Leu-295–Gly-315. At Gly-316 to Leu-320 the chain is on the extracellular side. The helical transmembrane segment at Met-321 to Val-341 threads the bilayer. At Asp-342–Arg-347 the chain is on the cytoplasmic side. Residues Val-348–Ile-368 form a helical membrane-spanning segment. Topologically, residues Ala-369–Ala-385 are extracellular. Residues Ile-386–Leu-406 form a helical membrane-spanning segment. The Cytoplasmic segment spans residues Gly-407–Ser-425. The chain crosses the membrane as a helical span at residues Val-426–Leu-446. Residues Cys-447–Lys-450 lie on the Extracellular side of the membrane. Residues Phe-451–Phe-471 form a helical membrane-spanning segment. Over Leu-472–Val-512 the chain is Cytoplasmic.

Belongs to the major facilitator superfamily. Sugar transporter (TC 2.A.1.1) family.

It is found in the membrane. Its function is as follows. Mediates active uptake of hexoses by sugar:proton symport. The polypeptide is Sugar transport protein MST7 (Oryza sativa subsp. japonica (Rice)).